The sequence spans 381 residues: Acetylornithine deacetylase (381 aa).

His-79 contributes to the Zn(2+) binding site. Residue Asp-81 is part of the active site. Position 111 (Asp-111) interacts with Zn(2+). Residue Glu-143 is part of the active site. Residues Glu-144, Glu-168, and His-354 each contribute to the Zn(2+) site.

This sequence belongs to the peptidase M20A family. ArgE subfamily. Homodimer. Zn(2+) serves as cofactor. It depends on Co(2+) as a cofactor. Glutathione is required as a cofactor.

Its subcellular location is the cytoplasm. It catalyses the reaction N(2)-acetyl-L-ornithine + H2O = L-ornithine + acetate. It functions in the pathway amino-acid biosynthesis; L-arginine biosynthesis; L-ornithine from N(2)-acetyl-L-ornithine (linear): step 1/1. Its function is as follows. Catalyzes the hydrolysis of the amide bond of N(2)-acetylated L-amino acids. Cleaves the acetyl group from N-acetyl-L-ornithine to form L-ornithine, an intermediate in L-arginine biosynthesis pathway, and a branchpoint in the synthesis of polyamines. The chain is Acetylornithine deacetylase from Buchnera aphidicola subsp. Acyrthosiphon pisum (strain 5A).